Here is a 378-residue protein sequence, read N- to C-terminus: Acetylornithine deacetylase (378 aa).

Histidine 76 is a Zn(2+) binding site. The active site involves aspartate 78. Aspartate 108 is a binding site for Zn(2+). Glutamate 140 is a catalytic residue. Zn(2+) contacts are provided by glutamate 141, glutamate 165, and histidine 351.

The protein belongs to the peptidase M20A family. ArgE subfamily. In terms of assembly, homodimer. Zn(2+) is required as a cofactor. Requires Co(2+) as cofactor. The cofactor is glutathione.

It is found in the cytoplasm. The enzyme catalyses N(2)-acetyl-L-ornithine + H2O = L-ornithine + acetate. It functions in the pathway amino-acid biosynthesis; L-arginine biosynthesis; L-ornithine from N(2)-acetyl-L-ornithine (linear): step 1/1. In terms of biological role, catalyzes the hydrolysis of the amide bond of N(2)-acetylated L-amino acids. Cleaves the acetyl group from N-acetyl-L-ornithine to form L-ornithine, an intermediate in L-arginine biosynthesis pathway, and a branchpoint in the synthesis of polyamines. This is Acetylornithine deacetylase from Aliivibrio salmonicida (strain LFI1238) (Vibrio salmonicida (strain LFI1238)).